Consider the following 329-residue polypeptide: Phosphate acyltransferase (329 aa).

It belongs to the PlsX family. As to quaternary structure, homodimer. Probably interacts with PlsY.

Its subcellular location is the cytoplasm. The enzyme catalyses a fatty acyl-[ACP] + phosphate = an acyl phosphate + holo-[ACP]. It functions in the pathway lipid metabolism; phospholipid metabolism. In terms of biological role, catalyzes the reversible formation of acyl-phosphate (acyl-PO(4)) from acyl-[acyl-carrier-protein] (acyl-ACP). This enzyme utilizes acyl-ACP as fatty acyl donor, but not acyl-CoA. In Geobacillus sp. (strain WCH70), this protein is Phosphate acyltransferase.